Reading from the N-terminus, the 657-residue chain is tRNA 5-methylaminomethyl-2-thiouridine biosynthesis bifunctional protein MnmC (657 aa).

Positions 1–233 are tRNA (mnm(5)s(2)U34)-methyltransferase; sequence MPRGLILATP…KRDMTVAAFP (233 aa). The interval 256–657 is FAD-dependent cmnm(5)s(2)U34 oxidoreductase; that stretch reads LGAGLAGCSV…RALRHGKHAA (402 aa).

This sequence in the N-terminal section; belongs to the methyltransferase superfamily. tRNA (mnm(5)s(2)U34)-methyltransferase family. In the C-terminal section; belongs to the DAO family. Requires FAD as cofactor.

Its subcellular location is the cytoplasm. The enzyme catalyses 5-aminomethyl-2-thiouridine(34) in tRNA + S-adenosyl-L-methionine = 5-methylaminomethyl-2-thiouridine(34) in tRNA + S-adenosyl-L-homocysteine + H(+). In terms of biological role, catalyzes the last two steps in the biosynthesis of 5-methylaminomethyl-2-thiouridine (mnm(5)s(2)U) at the wobble position (U34) in tRNA. Catalyzes the FAD-dependent demodification of cmnm(5)s(2)U34 to nm(5)s(2)U34, followed by the transfer of a methyl group from S-adenosyl-L-methionine to nm(5)s(2)U34, to form mnm(5)s(2)U34. This chain is tRNA 5-methylaminomethyl-2-thiouridine biosynthesis bifunctional protein MnmC, found in Ralstonia nicotianae (strain ATCC BAA-1114 / GMI1000) (Ralstonia solanacearum).